An 844-amino-acid chain; its full sequence is Beta-mannosidase B (844 aa).

Glu-432 acts as the Proton donor in catalysis.

It belongs to the glycosyl hydrolase 2 family. Beta-mannosidase B subfamily.

It catalyses the reaction Hydrolysis of terminal, non-reducing beta-D-mannose residues in beta-D-mannosides.. The protein operates within glycan metabolism; N-glycan degradation. In terms of biological role, exoglycosidase that cleaves the single beta-linked mannose residue from the non-reducing end of beta-mannosidic oligosaccharides of various complexity and length. Prefers mannobiose over mannotriose and has no activity against polymeric mannan. Is also severely restricted by galactosyl substitutions at the +1 subsite. The sequence is that of Beta-mannosidase B (mndB) from Aspergillus oryzae (strain ATCC 42149 / RIB 40) (Yellow koji mold).